The chain runs to 309 residues: Protein FdhE (309 aa).

The protein belongs to the FdhE family.

It is found in the cytoplasm. Its function is as follows. Necessary for formate dehydrogenase activity. This chain is Protein FdhE, found in Escherichia coli O45:K1 (strain S88 / ExPEC).